The sequence spans 1179 residues: Integrin alpha-E (1179 aa).

A signal peptide spans 1 to 18; that stretch reads MWLFHTLLCIASLALLAA. Residues 19 to 1124 lie on the Extracellular side of the membrane; sequence FNVDVARPWL…VFLKDEKYHS (1106 aa). FG-GAP repeat units follow at residues 22–79 and 80–138; these read DVAR…EILC and HPVE…PQAQ. Residue asparagine 49 is glycosylated (N-linked (GlcNAc...) asparagine). Disulfide bonds link cysteine 70–cysteine 79 and cysteine 126–cysteine 159. The tract at residues 145-199 is X-domain (extra domain); sequence ENLLDPDARVDTGDCYSNKEGGGEDDVNTARQRRALEKEEEEDKEEEEDEEEEEA. Residues 158-200 are disordered; sequence DCYSNKEGGGEDDVNTARQRRALEKEEEEDKEEEEDEEEEEAG. The segment covering 182–200 has biased composition (acidic residues); that stretch reads KEEEEDKEEEEDEEEEEAG. The 190-residue stretch at 200-389 folds into the VWFA domain; the sequence is GTEIAIILDG…SKLRYNIISM (190 aa). Asparagine 271 and asparagine 321 each carry an N-linked (GlcNAc...) asparagine glycan. Residues 390–442 form an FG-GAP 3 repeat; the sequence is EGTVGDALHYQLAQIGFSAQILDERQVLLGAVGAFDWSGGALLYDTRSRRGRF. A glycan (N-linked (GlcNAc...) asparagine) is linked at asparagine 444. FG-GAP repeat units follow at residues 447-499, 500-560, 563-627, and 631-691; these read AAAA…GREA, SFLP…DGSF, ARIL…GLSA, and QRIR…FTPS. Positions 522, 524, 526, 530, 586, 588, 590, 594, 654, 656, 658, and 662 each coordinate Ca(2+). Residues cysteine 706 and cysteine 762 are joined by a disulfide bond. Residues asparagine 726 and asparagine 782 are each glycosylated (N-linked (GlcNAc...) asparagine). Cysteines 823 and 829 form a disulfide. Asparagine 857 carries an N-linked (GlcNAc...) asparagine glycan. A disulfide bond links cysteine 893 and cysteine 907. Residues asparagine 934 and asparagine 954 are each glycosylated (N-linked (GlcNAc...) asparagine). Cystine bridges form between cysteine 1008–cysteine 1033 and cysteine 1041–cysteine 1057. N-linked (GlcNAc...) asparagine glycans are attached at residues asparagine 1065 and asparagine 1096. Residues 1125 to 1147 form a helical membrane-spanning segment; it reads LPIIIKGSVGGLLVLIVILVILF. The Cytoplasmic portion of the chain corresponds to 1148 to 1179; that stretch reads KCGFFKRKYQQLNLESIRKAQLKSENLLEEEN. The short motif at 1150 to 1154 is the GFFKR motif element; the sequence is GFFKR.

Belongs to the integrin alpha chain family. In terms of assembly, heterodimer of an alpha and a beta subunit. The alpha subunit is composed of a heavy and a light chains linked by a disulfide bond. Alpha-E associates with beta-7. Expressed on a subclass of T-lymphocytes known as intra-epithelial lymphocytes which are located between mucosal epithelial cells.

It is found in the membrane. Its function is as follows. Integrin alpha-E/beta-7 is a receptor for E-cadherin. It mediates adhesion of intra-epithelial T-lymphocytes to epithelial cell monolayers. In Homo sapiens (Human), this protein is Integrin alpha-E (ITGAE).